The chain runs to 178 residues: uncharacterized protein (178 aa).

A signal peptide spans 1–19 (MKKLLIVTMLFTLALSAQA).

The protein belongs to the opacity porin family.

This is an uncharacterized protein from Haemophilus influenzae (strain ATCC 51907 / DSM 11121 / KW20 / Rd).